Reading from the N-terminus, the 320-residue chain is MIGKLVRDLKIPDQRHPEKAHRPDNVQPKKPSWIRVKAPTSEGYKETRDIIRGQKLATVCEEAGCPNVGECWSQGHATMMIMGEICTRGCSFCNVATGRPQALDAFEPGRVAHAVSQLGLKHVVVTSVDRDDLEDGGAEHFAQTIRAIRHRAPATTIEVLVPDFLKCGPSALETVVAARPDVFNHNLETVPGLYPEVRPGARYFHSLRLLQRAKELDPSIFTKSGIMVGLGEDRQGVLQVMDDMRSAEVDFLTIGQYLQPTPKHHRVDRFVTPEEFAGYEKAAYGKGFLMVSATPLTRSSYHAGDDFARLRDARQKRLGA.

Basic and acidic residues predominate over residues 1–24 (MIGKLVRDLKIPDQRHPEKAHRPD). The tract at residues 1–30 (MIGKLVRDLKIPDQRHPEKAHRPDNVQPKK) is disordered. [4Fe-4S] cluster is bound by residues Cys-60, Cys-65, Cys-71, Cys-86, Cys-90, Cys-93, and Ser-300. Residues 72 to 289 (WSQGHATMMI…EKAAYGKGFL (218 aa)) form the Radical SAM core domain.

It belongs to the radical SAM superfamily. Lipoyl synthase family. [4Fe-4S] cluster serves as cofactor.

It localises to the cytoplasm. The catalysed reaction is [[Fe-S] cluster scaffold protein carrying a second [4Fe-4S](2+) cluster] + N(6)-octanoyl-L-lysyl-[protein] + 2 oxidized [2Fe-2S]-[ferredoxin] + 2 S-adenosyl-L-methionine + 4 H(+) = [[Fe-S] cluster scaffold protein] + N(6)-[(R)-dihydrolipoyl]-L-lysyl-[protein] + 4 Fe(3+) + 2 hydrogen sulfide + 2 5'-deoxyadenosine + 2 L-methionine + 2 reduced [2Fe-2S]-[ferredoxin]. Its pathway is protein modification; protein lipoylation via endogenous pathway; protein N(6)-(lipoyl)lysine from octanoyl-[acyl-carrier-protein]: step 2/2. Its function is as follows. Catalyzes the radical-mediated insertion of two sulfur atoms into the C-6 and C-8 positions of the octanoyl moiety bound to the lipoyl domains of lipoate-dependent enzymes, thereby converting the octanoylated domains into lipoylated derivatives. In Cereibacter sphaeroides (strain ATCC 17029 / ATH 2.4.9) (Rhodobacter sphaeroides), this protein is Lipoyl synthase.